A 242-amino-acid polypeptide reads, in one-letter code: AA9 family lytic polysaccharide monooxygenase F (242 aa).

The N-terminal stretch at 1–20 is a signal peptide; sequence MVQFKLSTASLLALASYAAA. Cu(2+) is bound at residue H21. A disordered region spans residues 31–53; that stretch reads GQTYPGADPHNPNPESPGWQAEN. Cystine bridges form between C71–C192 and C112–C116. Residue H101 participates in Cu(2+) binding. H178 and Q187 together coordinate O2. Y189 contacts Cu(2+).

It belongs to the polysaccharide monooxygenase AA9 family. Requires Cu(2+) as cofactor.

Its subcellular location is the secreted. The catalysed reaction is [(1-&gt;4)-beta-D-glucosyl]n+m + reduced acceptor + O2 = 4-dehydro-beta-D-glucosyl-[(1-&gt;4)-beta-D-glucosyl]n-1 + [(1-&gt;4)-beta-D-glucosyl]m + acceptor + H2O.. Functionally, lytic polysaccharide monooxygenase (LPMO) that depolymerizes crystalline and amorphous polysaccharides via the oxidation of scissile alpha- or beta-(1-4)-glycosidic bonds, yielding C1 or C4 oxidation products. Catalysis by LPMOs requires the reduction of the active-site copper from Cu(II) to Cu(I) by a reducing agent and H(2)O(2) or O(2) as a cosubstrate. Active on hemicelluloses, including xylan, glucomannan, and xyloglucan. Shows clear activity on cellooligosaccharides, generating C4 oxidation products. Has no activity on ivory nut mannan (INM), a linear beta-1,4-linked mannan without substitutions. The sequence is that of AA9 family lytic polysaccharide monooxygenase F from Malbranchea cinnamomea (Thermophilic fungus).